Consider the following 84-residue polypeptide: Small ribosomal subunit protein uS17 (84 aa).

It belongs to the universal ribosomal protein uS17 family. Part of the 30S ribosomal subunit.

Functionally, one of the primary rRNA binding proteins, it binds specifically to the 5'-end of 16S ribosomal RNA. This chain is Small ribosomal subunit protein uS17, found in Borrelia garinii subsp. bavariensis (strain ATCC BAA-2496 / DSM 23469 / PBi) (Borreliella bavariensis).